Reading from the N-terminus, the 610-residue chain is MQYSHHCEHLLERLNKQREAGFLCDCTIVIGEFQFKAHRNVLASFSEYFGAIYRSTSENNVFLDQSQVKADGFQKLLEFIYTGTLNLDSWNVKEIHQAADYLKVEEVVTKCKIKMEDFAFIANPSSTEISSITGNIELNQQTCLLTLRDYNNREKSEVSTDLIQANPKQGALAKKSSQTKKKKKAFNSPKTGQNKTVQYPSDILENASVELFLDANKLPTPVVEQVAQINDNSELELTSVVENTFPAQDIVHTVTVKRKRGKSQPNCALKEHSMSNIASVKSPYEAENSGEELDQRYSKAKPMCNTCGKVFSEASSLRRHMRIHKGVKPYVCHLCGKAFTQCNQLKTHVRTHTGEKPYKCELCDKGFAQKCQLVFHSRMHHGEEKPYKCDVCNLQFATSSNLKIHARKHSGEKPYVCDRCGQRFAQASTLTYHVRRHTGEKPYVCDTCGKAFAVSSSLITHSRKHTGEKPYICGICGKSFISSGELNKHFRSHTGERPFICELCGNSYTDIKNLKKHKTKVHSGADKTLDSSAEDHTLSEQDSIQKSPLSETMDVKPSDMTLPLALPLGTEDHHMLLPVTDTQSPTSDTLLRSTVNGYSEPQLIFLQQLY.

The 66-residue stretch at Cys-24–Ser-89 folds into the BTB domain. A disordered region spans residues Gln-169 to Val-197. 2 short sequence motifs (nuclear localization signal) span residues Lys-174–Lys-190 and Lys-257–Lys-262. Residues Ser-188 to Val-197 show a composition bias toward polar residues. At Ser-289 the chain carries Phosphoserine. 8 consecutive C2H2-type zinc fingers follow at residues Pro-302 to His-324, Tyr-330 to His-352, Tyr-358 to His-381, Tyr-387 to His-409, Tyr-415 to His-437, Tyr-443 to His-465, Tyr-471 to His-493, and Phe-499 to His-522. The tract at residues Val-521–Lys-556 is disordered. The span at Ser-523–Ser-539 shows a compositional bias: basic and acidic residues. A compositionally biased stretch (polar residues) spans Glu-540 to Ser-550.

This sequence belongs to the krueppel C2H2-type zinc-finger protein family. Mainly expressed in the neuromuscular system. Located in and around synaptic myonuclei in adult muscle. Expression is dysregulated after nerve injury. Also found in the testis, ovary and placenta.

It is found in the nucleus. This chain is Myoneurin (MYNN), found in Homo sapiens (Human).